A 487-amino-acid chain; its full sequence is Probable Xaa-Pro aminopeptidase AFUB_014460 (487 aa).

Mn(2+) is bound by residues Asp267, Asp278, Glu416, and Glu455.

The protein belongs to the peptidase M24B family. Mn(2+) is required as a cofactor.

The enzyme catalyses Release of any N-terminal amino acid, including proline, that is linked to proline, even from a dipeptide or tripeptide.. Catalyzes the removal of a penultimate prolyl residue from the N-termini of peptides. In Aspergillus fumigatus (strain CBS 144.89 / FGSC A1163 / CEA10) (Neosartorya fumigata), this protein is Probable Xaa-Pro aminopeptidase AFUB_014460.